Here is a 509-residue protein sequence, read N- to C-terminus: Cardiolipin synthase 1 (509 aa).

The next 3 membrane-spanning stretches (helical) occupy residues 4 to 24, 30 to 50, and 59 to 79; these read PIIQ…LLNT, YTFV…VIFI, and LAWF…YSIF. 2 PLD phosphodiesterase domains span residues 238–265 and 422–449; these read VNYR…GDEY and KDGF…DVRS. Catalysis depends on residues His-243, Lys-245, Asp-250, His-427, Lys-429, and Asp-434.

It belongs to the phospholipase D family. Cardiolipin synthase subfamily.

It is found in the cell membrane. It catalyses the reaction 2 a 1,2-diacyl-sn-glycero-3-phospho-(1'-sn-glycerol) = a cardiolipin + glycerol. Catalyzes the reversible phosphatidyl group transfer from one phosphatidylglycerol molecule to another to form cardiolipin (CL) (diphosphatidylglycerol) and glycerol. The sequence is that of Cardiolipin synthase 1 (cls1) from Bacillus anthracis.